A 577-amino-acid polypeptide reads, in one-letter code: MSAFCLGLAGRASAPAEPDSACCMELPAGAGDAVRSPATAAALVSFPGGPGELELALEEELALLAAGERSSEPGEHPQAEPESPVEGHGPPLPPPPTQDPELLSVIRQKEKDLVLAARLGKALLERNQDMSRQYEQMHKELTDKLEHLEQEKHELRRRFENREGEWEGRVSELETDVKQLQDELERQQLHLREADREKTRAVQELSEQNQRLLDQLSRASEVERQLSMQVHALKEDFREKNSSTNQHIIRLESLQAEIKMLSDRKRELEHRLSATLEENDLLQGTVEELQDRVLILERQGHDKDLQLHQSQLELQEVRLSYRQLQGKVEELTEERSLQSSAATSTSLLSEIEQSMEAEELEQEREQLRLQLWEAYCQVRYLCSHLRGNDSADSAVSTDSSMDESSETSSAKDVPAGSLRTALNDLKRLIQSIVDGVEPTVTLLSVEMTALKEERDRLRVTSEDKEPKEQLQKAIRDRDEAIAKKNAVELELAKCKMDMMSLNSQLLDAIQQKLNLSQQLEAWQDDMHRVIDRQLMDTHLKEQSRPAAAAFPRGHGVGRGQEPSTADGKRLFSFFRKI.

A disordered region spans residues 63-100; it reads LLAAGERSSEPGEHPQAEPESPVEGHGPPLPPPPTQDP. The segment covering 69–79 has biased composition (basic and acidic residues); the sequence is RSSEPGEHPQA. Residues 116 to 120 carry the CC1 box motif; it reads AARLG. Positions 121-379 form a coiled coil; sequence KALLERNQDM…QLWEAYCQVR (259 aa). Residues 389–415 form a disordered region; it reads DSADSAVSTDSSMDESSETSSAKDVPA. Residues 390 to 399 show a composition bias toward low complexity; the sequence is SADSAVSTDS. Residues 443 to 528 adopt a coiled-coil conformation; it reads LSVEMTALKE…LEAWQDDMHR (86 aa).

Belongs to the BICDR family. In terms of assembly, part of a tripartite complex with dynein and dynactin, acts an adapter linking the dynein motor complex and dynactin. Interacts with KIF1C. Interacts with RAB6A and RAB6B; interaction is specific to Rab6. Highly expressed during early embryonic development. Predominantly expressed in kidney, undifferentiated neural tissue and developing eye.

The protein localises to the cytoplasm. Its subcellular location is the cytoskeleton. The protein resides in the microtubule organizing center. It localises to the centrosome. In terms of biological role, acts as an adapter protein linking the dynein motor complex to various cargos and converts dynein from a non-processive to a highly processive motor in the presence of dynactin. Facilitates the interaction between dynein and dynactin and activates dynein processivity (the ability to move along a microtubule for a long distance without falling off the track). Predominantly recruits 2 dyneins, which increases both the force and speed of the microtubule motor. Component of secretory vesicle machinery in developing neurons that acts as a regulator of neurite outgrowth. Regulates the secretory vesicle transport by controlling the accumulation of Rab6-containing secretory vesicles in the pericentrosomal region restricting anterograde secretory transport during the early phase of neuronal differentiation, thereby inhibiting neuritogenesis. In Mus musculus (Mouse), this protein is BICD family-like cargo adapter 1 (Bicdl1).